The chain runs to 320 residues: MQIRNTFSSLKGEITRFISVSLMIYIITRASISNAYPIFAQQGFENPREATGRIVCANCHLANKPVDIEVPQAVLPDTVFEAVVRIPYDMQLKQVLANGKKGALNVGAVLILPEGFELAPPDRISPEMKEKIGKLSFQTYRPTKKNILVIGPVPGQKYSEITFPILSPNPATNKDAYFLKYPIYVGGNRGRGQIYPDGNKSNNTVYNATSAGIVSKIIRKEKGGYEITITDASNGREVVDIIPPGPELRVSEGQSIKLDQPLTSNPNVGGFGQADAEIVLQDPLRVQGLLFFLASVVLAQIFLVLKKKQFEKVQLSEMNF.

Positions 1-35 are cleaved as a signal peptide; it reads MQIRNTFSSLKGEITRFISVSLMIYIITRASISNA. Positions 36, 56, 59, and 60 each coordinate heme. A helical transmembrane segment spans residues 286-306; that stretch reads VQGLLFFLASVVLAQIFLVLK.

The protein belongs to the cytochrome f family. In terms of assembly, the 4 large subunits of the cytochrome b6-f complex are cytochrome b6, subunit IV (17 kDa polypeptide, petD), cytochrome f and the Rieske protein, while the 4 small subunits are PetG, PetL, PetM and PetN. The complex functions as a dimer. The cofactor is heme.

It localises to the plastid. Its subcellular location is the chloroplast thylakoid membrane. Its function is as follows. Component of the cytochrome b6-f complex, which mediates electron transfer between photosystem II (PSII) and photosystem I (PSI), cyclic electron flow around PSI, and state transitions. This Citrus sinensis (Sweet orange) protein is Cytochrome f.